The primary structure comprises 362 residues: UPF0283 membrane protein Arad_2632 (362 aa).

The segment covering 1–11 (MTKPTEDDPKG) has biased composition (basic and acidic residues). Residues 1 to 47 (MTKPTEDDPKGISRRPAAFSLEQEASREGAHTKTTAETPRRKPQSFD) are disordered. The next 2 membrane-spanning stretches (helical) occupy residues 82–102 (FSFG…AFGL) and 118–138 (LGYT…AIVV).

This sequence belongs to the UPF0283 family.

Its subcellular location is the cell inner membrane. This is UPF0283 membrane protein Arad_2632 from Rhizobium rhizogenes (strain K84 / ATCC BAA-868) (Agrobacterium radiobacter).